A 445-amino-acid chain; its full sequence is Phosphoglucosamine mutase (445 aa).

Ser-102 serves as the catalytic Phosphoserine intermediate. Ser-102, Asp-240, Asp-242, and Asp-244 together coordinate Mg(2+). Ser-102 is modified (phosphoserine).

The protein belongs to the phosphohexose mutase family. Requires Mg(2+) as cofactor. Activated by phosphorylation.

The enzyme catalyses alpha-D-glucosamine 1-phosphate = D-glucosamine 6-phosphate. Functionally, catalyzes the conversion of glucosamine-6-phosphate to glucosamine-1-phosphate. This chain is Phosphoglucosamine mutase, found in Mycolicibacterium vanbaalenii (strain DSM 7251 / JCM 13017 / BCRC 16820 / KCTC 9966 / NRRL B-24157 / PYR-1) (Mycobacterium vanbaalenii).